The sequence spans 75 residues: Acyl carrier protein (75 aa).

Residues 1 to 75 (MALFDDVKEV…GDAIKFIENV (75 aa)) form the Carrier domain. The residue at position 36 (Ser-36) is an O-(pantetheine 4'-phosphoryl)serine.

Belongs to the acyl carrier protein (ACP) family. In terms of processing, 4'-phosphopantetheine is transferred from CoA to a specific serine of apo-ACP by AcpS. This modification is essential for activity because fatty acids are bound in thioester linkage to the sulfhydryl of the prosthetic group.

The protein resides in the cytoplasm. It functions in the pathway lipid metabolism; fatty acid biosynthesis. Its function is as follows. Carrier of the growing fatty acid chain in fatty acid biosynthesis. This chain is Acyl carrier protein, found in Sulfurovum sp. (strain NBC37-1).